The primary structure comprises 133 residues: Interleukin-4 (133 aa).

Residues 1–24 form the signal peptide; that stretch reads MGLTSQLIPTLVCLLVCTSNFAHG. Cystine bridges form between Cys-27-Cys-133, Cys-48-Cys-85, and Cys-70-Cys-105. N-linked (GlcNAc...) asparagine glycosylation is found at Asn-62, Asn-96, Asn-102, and Asn-108.

This sequence belongs to the IL-4/IL-13 family.

It localises to the secreted. Functionally, participates in at least several B-cell activation processes as well as of other cell types. It is a costimulator of DNA-synthesis. It induces the expression of class II MHC molecules on resting B-cells. It enhances both secretion and cell surface expression of IgE and IgG1. It also regulates the expression of the low affinity Fc receptor for IgE (CD23) on both lymphocytes and monocytes. Positively regulates IL31RA expression in macrophages. Stimulates autophagy in dendritic cells by interfering with mTORC1 signaling and through the induction of RUFY4. The chain is Interleukin-4 (IL4) from Lama glama (Llama).